The chain runs to 1728 residues: Nebulin-related-anchoring protein (1728 aa).

Positions 4 to 64 constitute an LIM zinc-binding domain; that stretch reads QACSRCGYGV…HAHNPKNNTF (61 aa). Nebulin repeat units lie at residues 173-200, 201-235, 244-271, 313-340, 345-379, 386-414, 416-450, 484-518, 519-553, 555-589, 599-623, 624-658, 659-689, 699-721, 723-757, 758-792, 794-828, 841-866, 867-893, 898-932, 943-960, 966-1000, 1001-1035, 1037-1071, 1075-1109, 1110-1136, 1141-1175, 1180-1203, 1209-1243, 1244-1278, 1280-1314, 1318-1352, 1353-1379, 1384-1418, 1425-1446, 1452-1478, 1487-1521, 1523-1557, 1561-1595, 1596-1630, and 1637-1661; these read TPAY…ERVS, TFTP…QQRG, TPAY…REMK, TPAY…KMKG, HSLA…NSKG, ETPQ…TQLR, HYDG…HDVV, KFSS…RNKL, NYTL…KTKG, GFEM…KMKG, LLHS…ESKT, HFNL…DYTV, LPED…WMRG, NLEQ…RVDE, KFTS…QSVH, QYTI…KQKA, GFEL…RSRG, QMSH…DTRS, QCHI…VGYR, CFTA…WMKG, VEQA…KYRQ, KFTS…NVKH, HYTQ…RLRD, GYKL…RMKG, GSRS…HAKA, HFHL…QDYR, QHTV…FMRG, VPGT…KYRQ, KYTA…DARH, QYTM…NLRA, GYKL…KERG, GVRN…SSQA, QCHL…HDYR, EFTA…GMKG, QSPQ…KYRK, KFTT…RLYR, RYTP…QSRA, GYDF…RDRG, GYRS…KGRS, QFHS…QHTS, and LKHA…LTRG. Thr-203 bears the Phosphothreonine mark. Ser-1078 is modified (phosphoserine).

As to quaternary structure, interacts with actin, alpha-actinin, KLHL41, TLN1 and VCL. Interacts with CSRP3. As to expression, expressed in cardiac and skeletal muscle. Not detected in kidney, spleen, liver, brain, lung, stomach or uterus.

May be involved in anchoring the terminal actin filaments in the myofibril to the membrane and in transmitting tension from the myofibrils to the extracellular matrix. This Mus musculus (Mouse) protein is Nebulin-related-anchoring protein.